Here is a 161-residue protein sequence, read N- to C-terminus: Phosphopantetheine adenylyltransferase (161 aa).

Thr10 is a binding site for substrate. Residues 10–11 (TF) and His18 each bind ATP. Residues Lys42, Leu74, and Arg88 each contribute to the substrate site. Residues 89 to 91 (GVR), Glu99, and 123 to 129 (YIHISST) each bind ATP.

Belongs to the bacterial CoaD family. Homohexamer. Mg(2+) serves as cofactor.

It is found in the cytoplasm. It carries out the reaction (R)-4'-phosphopantetheine + ATP + H(+) = 3'-dephospho-CoA + diphosphate. Its pathway is cofactor biosynthesis; coenzyme A biosynthesis; CoA from (R)-pantothenate: step 4/5. Functionally, reversibly transfers an adenylyl group from ATP to 4'-phosphopantetheine, yielding dephospho-CoA (dPCoA) and pyrophosphate. The polypeptide is Phosphopantetheine adenylyltransferase (Aquifex aeolicus (strain VF5)).